Reading from the N-terminus, the 135-residue chain is PTS system sorbose-specific EIIA component (135 aa).

The region spanning 1-131 is the PTS EIIA type-4 domain; that stretch reads MVHAIFCAHG…CVVWQQPETV (131 aa). The Tele-phosphohistidine intermediate role is filled by His-9. At His-9 the chain carries Phosphohistidine; by HPr.

It localises to the cytoplasm. Its function is as follows. The phosphoenolpyruvate-dependent sugar phosphotransferase system (PTS), a major carbohydrate active transport system, catalyzes the phosphorylation of incoming sugar substrates concomitant with their translocation across the cell membrane. The enzyme II SorABFM PTS system is involved in L-sorbose transport. The chain is PTS system sorbose-specific EIIA component from Klebsiella pneumoniae.